The following is a 376-amino-acid chain: UDP-N-acetylglucosamine--N-acetylmuramyl-(pentapeptide) pyrophosphoryl-undecaprenol N-acetylglucosamine transferase (376 aa).

UDP-N-acetyl-alpha-D-glucosamine contacts are provided by residues 12–14, Asn-125, Arg-165, Ser-197, and Gln-296; that span reads TGG.

The protein belongs to the glycosyltransferase 28 family. MurG subfamily.

It is found in the cell inner membrane. It carries out the reaction di-trans,octa-cis-undecaprenyl diphospho-N-acetyl-alpha-D-muramoyl-L-alanyl-D-glutamyl-meso-2,6-diaminopimeloyl-D-alanyl-D-alanine + UDP-N-acetyl-alpha-D-glucosamine = di-trans,octa-cis-undecaprenyl diphospho-[N-acetyl-alpha-D-glucosaminyl-(1-&gt;4)]-N-acetyl-alpha-D-muramoyl-L-alanyl-D-glutamyl-meso-2,6-diaminopimeloyl-D-alanyl-D-alanine + UDP + H(+). Its pathway is cell wall biogenesis; peptidoglycan biosynthesis. In terms of biological role, cell wall formation. Catalyzes the transfer of a GlcNAc subunit on undecaprenyl-pyrophosphoryl-MurNAc-pentapeptide (lipid intermediate I) to form undecaprenyl-pyrophosphoryl-MurNAc-(pentapeptide)GlcNAc (lipid intermediate II). The sequence is that of UDP-N-acetylglucosamine--N-acetylmuramyl-(pentapeptide) pyrophosphoryl-undecaprenol N-acetylglucosamine transferase from Protochlamydia amoebophila (strain UWE25).